The sequence spans 1044 residues: Outer dynein arm-docking complex subunit 2 (1044 aa).

2 stretches are compositionally biased toward basic and acidic residues: residues 317–338 (IKFS…EVAI) and 379–401 (SKDR…EKSR). 2 disordered regions span residues 317–409 (IKFS…PGRA) and 423–446 (ISDS…ANAD). HEAT repeat units follow at residues 448-485 (PSEY…AQET), 487-527 (QLAI…NPQI), 530-568 (NIVD…FRRA), 627-665 (AIRK…EENY), and 668-706 (AIKA…DEET). ARM repeat units follow at residues 484–523 (ETCQ…EISH), 525–564 (PQIR…NVAK), 535–577 (GGLP…RHGG), 622–661 (YANK…ECAS), 663–702 (ENYR…QCAE), 746–785 (KENV…ECCQ), 828–867 (PESM…PCIQ), 871–910 (DAGE…NIAK), 912–951 (QENL…RCCM), 953–992 (GRNR…QLSE), and 1004–1031 (GAVK…ISNI). 5 HEAT repeats span residues 831 to 870 (MMII…QNAK), 874 to 914 (EMVR…DQEN), 916 to 955 (AVIT…WGRN), 958 to 996 (AFGE…DADN), and 999 to 1037 (TMHE…LALA).

In terms of assembly, component of the outer dynein arm-docking complex along with ODAD1, ODAD3, ODAD4 and CLXN. Interacts with CFAP61. As to expression, expressed in trachea multiciliated cells.

It localises to the cytoplasm. It is found in the cytoskeleton. The protein resides in the cilium axoneme. Its subcellular location is the cilium basal body. In terms of biological role, component of the outer dynein arm-docking complex (ODA-DC) that mediates outer dynein arms (ODA) binding onto the doublet microtubule. Involved in mediating assembly of both ODAs and their axonemal docking complex onto ciliary microtubules. In Bos taurus (Bovine), this protein is Outer dynein arm-docking complex subunit 2 (ODAD2).